The primary structure comprises 512 residues: DEAD-box ATP-dependent RNA helicase 5 (512 aa).

2 disordered regions span residues 1–33 and 45–76; these read MGRSMLPEQQEDVSRKSKKEKKSKKDKKRKLEA and ATSTDEATKSSKKKRAKGDLGQGEEAENGGGK. The stretch at 14 to 45 forms a coiled coil; it reads SRKSKKEKKSKKDKKRKLEAEAEVVVVEAAAA. Residues 16–30 are compositionally biased toward basic residues; it reads KSKKEKKSKKDKKRK. Positions 94–120 match the Q motif motif; the sequence is SSFAATALPPQVLDCCKGFERPSPIQA. One can recognise a Helicase ATP-binding domain in the interval 123-300; the sequence is WPYLLDGRDF…QEFMDPNPIK (178 aa). 136–143 lines the ATP pocket; the sequence is AATGSGKT. A DEAD box motif is present at residues 248–251; the sequence is DEAD. Residues 333 to 476 enclose the Helicase C-terminal domain; it reads LLDKYHKAQR…VVPPALTKFG (144 aa).

It belongs to the DEAD box helicase family. DDX5/DBP2 subfamily.

It is found in the nucleus. The protein localises to the nucleolus. It catalyses the reaction ATP + H2O = ADP + phosphate + H(+). ATP-dependent RNA helicase required for 60S ribosomal subunit synthesis. Involved in efficient pre-rRNA processing, predominantly at site A3, which is necessary for the normal formation of 25S and 5.8S rRNAs. In Oryza sativa subsp. japonica (Rice), this protein is DEAD-box ATP-dependent RNA helicase 5.